Consider the following 932-residue polypeptide: Leucine--tRNA ligase (932 aa).

A 'HIGH' region motif is present at residues 38–48 (PYLNGNLHAGH). The 'KMSKS' region signature appears at 630 to 634 (KMSKS). Lys-633 is a binding site for ATP.

This sequence belongs to the class-I aminoacyl-tRNA synthetase family.

Its subcellular location is the cytoplasm. The enzyme catalyses tRNA(Leu) + L-leucine + ATP = L-leucyl-tRNA(Leu) + AMP + diphosphate. This is Leucine--tRNA ligase from Archaeoglobus fulgidus (strain ATCC 49558 / DSM 4304 / JCM 9628 / NBRC 100126 / VC-16).